Here is a 98-residue protein sequence, read N- to C-terminus: Co-chaperonin GroES (98 aa).

This sequence belongs to the GroES chaperonin family. As to quaternary structure, heptamer of 7 subunits arranged in a ring. Interacts with the chaperonin GroEL.

The protein resides in the cytoplasm. Functionally, together with the chaperonin GroEL, plays an essential role in assisting protein folding. The GroEL-GroES system forms a nano-cage that allows encapsulation of the non-native substrate proteins and provides a physical environment optimized to promote and accelerate protein folding. GroES binds to the apical surface of the GroEL ring, thereby capping the opening of the GroEL channel. The polypeptide is Co-chaperonin GroES (Micrococcus luteus (strain ATCC 4698 / DSM 20030 / JCM 1464 / CCM 169 / CCUG 5858 / IAM 1056 / NBRC 3333 / NCIMB 9278 / NCTC 2665 / VKM Ac-2230) (Micrococcus lysodeikticus)).